A 78-amino-acid polypeptide reads, in one-letter code: Protein SlyX homolog (78 aa).

Belongs to the SlyX family.

In Xanthomonas euvesicatoria pv. vesicatoria (strain 85-10) (Xanthomonas campestris pv. vesicatoria), this protein is Protein SlyX homolog.